The primary structure comprises 353 residues: MKEEIPVLKGKTKKELEEICVSLGLEKYRAAQIYTGIYKSRYTTIDQFTTLSKEVREKLKEHTQYPEIEIGRDLVSKEDGTRKFTFYVGENKEIEAVWIPSGDGGRKTICISSQIGCTLNCKFCATGLLEYKGNLQTWQILDQVLQVERLVGDRATNIVFMGMGEPMHNYFSVMKAAHILRDKDAFGLGALRITISTAGVTTGINRFIENKEPFNFAISLNHPNPNARSSVMDVNDKHPLEKLIDSAKRFTKELDRAITFEYVMIPDVNMGRDNAERLAKIARSVNKCKINVIPLNTDFTGWRRPTDDEVKDFVMHLKAKTTAPILNRRSPGRDINGACGMLALKGIRSETTK.

Glutamate 95 serves as the catalytic Proton acceptor. Positions 103 to 333 (DGGRKTICIS…PILNRRSPGR (231 aa)) constitute a Radical SAM core domain. A disulfide bridge links cysteine 110 with cysteine 339. [4Fe-4S] cluster-binding residues include cysteine 117, cysteine 121, and cysteine 124. S-adenosyl-L-methionine contacts are provided by residues 164-165 (GE), serine 196, 219-221 (SLN), and asparagine 296. Catalysis depends on cysteine 339, which acts as the S-methylcysteine intermediate.

This sequence belongs to the radical SAM superfamily. RlmN family. [4Fe-4S] cluster serves as cofactor.

It localises to the cytoplasm. It carries out the reaction adenosine(2503) in 23S rRNA + 2 reduced [2Fe-2S]-[ferredoxin] + 2 S-adenosyl-L-methionine = 2-methyladenosine(2503) in 23S rRNA + 5'-deoxyadenosine + L-methionine + 2 oxidized [2Fe-2S]-[ferredoxin] + S-adenosyl-L-homocysteine. The enzyme catalyses adenosine(37) in tRNA + 2 reduced [2Fe-2S]-[ferredoxin] + 2 S-adenosyl-L-methionine = 2-methyladenosine(37) in tRNA + 5'-deoxyadenosine + L-methionine + 2 oxidized [2Fe-2S]-[ferredoxin] + S-adenosyl-L-homocysteine. In terms of biological role, specifically methylates position 2 of adenine 2503 in 23S rRNA and position 2 of adenine 37 in tRNAs. The sequence is that of Probable dual-specificity RNA methyltransferase RlmN from Leptospira biflexa serovar Patoc (strain Patoc 1 / Ames).